The chain runs to 275 residues: NH(3)-dependent NAD(+) synthetase (275 aa).

46–53 is an ATP binding site; it reads GISGGQDS. Asp52 lines the Mg(2+) pocket. Arg140 contributes to the deamido-NAD(+) binding site. ATP is bound at residue Thr160. Glu165 serves as a coordination point for Mg(2+). Residues Lys173 and Asp180 each coordinate deamido-NAD(+). Positions 189 and 211 each coordinate ATP. Deamido-NAD(+) is bound at residue 260–261; the sequence is HK.

Belongs to the NAD synthetase family. As to quaternary structure, homodimer.

The enzyme catalyses deamido-NAD(+) + NH4(+) + ATP = AMP + diphosphate + NAD(+) + H(+). It functions in the pathway cofactor biosynthesis; NAD(+) biosynthesis; NAD(+) from deamido-NAD(+) (ammonia route): step 1/1. In terms of biological role, catalyzes the ATP-dependent amidation of deamido-NAD to form NAD. Uses ammonia as a nitrogen source. The protein is NH(3)-dependent NAD(+) synthetase of Cronobacter sakazakii (strain ATCC BAA-894) (Enterobacter sakazakii).